Reading from the N-terminus, the 127-residue chain is NADPH-dependent 7-cyano-7-deazaguanine reductase (127 aa).

Residue C40 is the Thioimide intermediate of the active site. The active-site Proton donor is the D47. Substrate-binding positions include 62–64 (VEL) and 81–82 (HE).

It belongs to the GTP cyclohydrolase I family. QueF type 1 subfamily.

It localises to the cytoplasm. The catalysed reaction is 7-aminomethyl-7-carbaguanine + 2 NADP(+) = 7-cyano-7-deazaguanine + 2 NADPH + 3 H(+). Its pathway is tRNA modification; tRNA-queuosine biosynthesis. Functionally, catalyzes the NADPH-dependent reduction of 7-cyano-7-deazaguanine (preQ0) to 7-aminomethyl-7-deazaguanine (preQ1). This Campylobacter jejuni subsp. jejuni serotype O:2 (strain ATCC 700819 / NCTC 11168) protein is NADPH-dependent 7-cyano-7-deazaguanine reductase.